Consider the following 85-residue polypeptide: Homeobox protein liguleless 3 (85 aa).

The ELK domain maps to 1-21; sequence ELKEMLLKKYSGCLSRLRSEF. Positions 22 to 85 form a DNA-binding region, homeobox; TALE-type; the sequence is LKKRKKGKLP…NQRKRHWKPS (64 aa).

The protein belongs to the TALE/KNOX homeobox family.

Its subcellular location is the nucleus. Probably binds to the DNA sequence 5'-TGAC-3'. The sequence is that of Homeobox protein liguleless 3 (LG3) from Zea mays (Maize).